The sequence spans 295 residues: Phosphatidylserine decarboxylase proenzyme (295 aa).

Active-site charge relay system; for autoendoproteolytic cleavage activity residues include Asp113, His169, and Ser256. Ser256 (schiff-base intermediate with substrate; via pyruvic acid; for decarboxylase activity) is an active-site residue. Ser256 carries the post-translational modification Pyruvic acid (Ser); by autocatalysis.

Belongs to the phosphatidylserine decarboxylase family. PSD-B subfamily. Prokaryotic type II sub-subfamily. As to quaternary structure, heterodimer of a large membrane-associated beta subunit and a small pyruvoyl-containing alpha subunit. Requires pyruvate as cofactor. In terms of processing, is synthesized initially as an inactive proenzyme. Formation of the active enzyme involves a self-maturation process in which the active site pyruvoyl group is generated from an internal serine residue via an autocatalytic post-translational modification. Two non-identical subunits are generated from the proenzyme in this reaction, and the pyruvate is formed at the N-terminus of the alpha chain, which is derived from the carboxyl end of the proenzyme. The autoendoproteolytic cleavage occurs by a canonical serine protease mechanism, in which the side chain hydroxyl group of the serine supplies its oxygen atom to form the C-terminus of the beta chain, while the remainder of the serine residue undergoes an oxidative deamination to produce ammonia and the pyruvoyl prosthetic group on the alpha chain. During this reaction, the Ser that is part of the protease active site of the proenzyme becomes the pyruvoyl prosthetic group, which constitutes an essential element of the active site of the mature decarboxylase.

It is found in the cell membrane. The catalysed reaction is a 1,2-diacyl-sn-glycero-3-phospho-L-serine + H(+) = a 1,2-diacyl-sn-glycero-3-phosphoethanolamine + CO2. Its pathway is phospholipid metabolism; phosphatidylethanolamine biosynthesis; phosphatidylethanolamine from CDP-diacylglycerol: step 2/2. Functionally, catalyzes the formation of phosphatidylethanolamine (PtdEtn) from phosphatidylserine (PtdSer). This is Phosphatidylserine decarboxylase proenzyme from Clostridium botulinum (strain Kyoto / Type A2).